The following is a 425-amino-acid chain: tRNA(Ile)-lysidine synthase (425 aa).

27-32 (SGGLDS) provides a ligand contact to ATP.

The protein belongs to the tRNA(Ile)-lysidine synthase family.

Its subcellular location is the cytoplasm. It catalyses the reaction cytidine(34) in tRNA(Ile2) + L-lysine + ATP = lysidine(34) in tRNA(Ile2) + AMP + diphosphate + H(+). In terms of biological role, ligates lysine onto the cytidine present at position 34 of the AUA codon-specific tRNA(Ile) that contains the anticodon CAU, in an ATP-dependent manner. Cytidine is converted to lysidine, thus changing the amino acid specificity of the tRNA from methionine to isoleucine. The chain is tRNA(Ile)-lysidine synthase from Streptococcus pneumoniae (strain 70585).